The following is a 309-amino-acid chain: Small ribosomal subunit biogenesis GTPase RsgA (309 aa).

Residues Lys-88 to Pro-247 form the CP-type G domain. Residues Thr-137–Asp-140 and Gly-189–Ser-197 contribute to the GTP site. Zn(2+) contacts are provided by Cys-272, Cys-277, His-279, and Cys-285.

It belongs to the TRAFAC class YlqF/YawG GTPase family. RsgA subfamily. As to quaternary structure, monomer. Associates with 30S ribosomal subunit, binds 16S rRNA. It depends on Zn(2+) as a cofactor.

Its subcellular location is the cytoplasm. Functionally, one of several proteins that assist in the late maturation steps of the functional core of the 30S ribosomal subunit. Helps release RbfA from mature subunits. May play a role in the assembly of ribosomal proteins into the subunit. Circularly permuted GTPase that catalyzes slow GTP hydrolysis, GTPase activity is stimulated by the 30S ribosomal subunit. The polypeptide is Small ribosomal subunit biogenesis GTPase RsgA (Prochlorococcus marinus (strain SARG / CCMP1375 / SS120)).